The sequence spans 107 residues: Iron-sulfur cluster assembly protein CyaY (107 aa).

It belongs to the frataxin family.

In terms of biological role, involved in iron-sulfur (Fe-S) cluster assembly. May act as a regulator of Fe-S biogenesis. In Yersinia intermedia, this protein is Iron-sulfur cluster assembly protein CyaY.